Here is a 388-residue protein sequence, read N- to C-terminus: Succinate--CoA ligase [ADP-forming] subunit beta (388 aa).

The ATP-grasp domain occupies 9-244 (KQLFARYGLP…QSQEDPRAAQ (236 aa)). ATP contacts are provided by residues lysine 46, 53–55 (GRG), glutamate 99, threonine 102, and glutamate 107. Residues asparagine 199 and aspartate 213 each contribute to the Mg(2+) site. Substrate-binding positions include asparagine 264 and 321 to 323 (GIV).

This sequence belongs to the succinate/malate CoA ligase beta subunit family. As to quaternary structure, heterotetramer of two alpha and two beta subunits. Mg(2+) serves as cofactor.

The enzyme catalyses succinate + ATP + CoA = succinyl-CoA + ADP + phosphate. The catalysed reaction is GTP + succinate + CoA = succinyl-CoA + GDP + phosphate. It functions in the pathway carbohydrate metabolism; tricarboxylic acid cycle; succinate from succinyl-CoA (ligase route): step 1/1. In terms of biological role, succinyl-CoA synthetase functions in the citric acid cycle (TCA), coupling the hydrolysis of succinyl-CoA to the synthesis of either ATP or GTP and thus represents the only step of substrate-level phosphorylation in the TCA. The beta subunit provides nucleotide specificity of the enzyme and binds the substrate succinate, while the binding sites for coenzyme A and phosphate are found in the alpha subunit. This chain is Succinate--CoA ligase [ADP-forming] subunit beta, found in Shigella flexneri serotype 5b (strain 8401).